The sequence spans 631 residues: tRNA uridine 5-carboxymethylaminomethyl modification enzyme MnmG (631 aa).

FAD contacts are provided by residues 13-18 (GGGHAG), Val-125, and Ser-180. 273–287 (GPRYCPSIEDKVMRF) provides a ligand contact to NAD(+). Gln-370 provides a ligand contact to FAD.

This sequence belongs to the MnmG family. As to quaternary structure, homodimer. Heterotetramer of two MnmE and two MnmG subunits. FAD serves as cofactor.

The protein localises to the cytoplasm. NAD-binding protein involved in the addition of a carboxymethylaminomethyl (cmnm) group at the wobble position (U34) of certain tRNAs, forming tRNA-cmnm(5)s(2)U34. This Vibrio parahaemolyticus serotype O3:K6 (strain RIMD 2210633) protein is tRNA uridine 5-carboxymethylaminomethyl modification enzyme MnmG.